We begin with the raw amino-acid sequence, 882 residues long: MTTSELPEHLAKHEVRYADHRQVERDRLTPMMQHYAEVKDQHLQQILLYRMGDFFECFFQDAIVVARELELVLTSKEAGKEVGRVPMAGIPYHALDRYASQLVEKGYAIAICDQVETAAQAQGPLVRREITRIITPGTILEEGMLQARRNNFLAAVVIAGEHWGLAYADSSTGDYWTSQSTGLEGLTQELYRLQPSEVLFPSAAPDLAGLLRPGQSKPQQIPDCLPDSFCYALRSPMPFELHEARQRLLEHFQLRSLEGCGCEQLPLAIRAAGGLLDYLGETQRESLAPLQKPRTYSLSEFLILDQQTRRNLEITQTQRDGSFHGSLLWALDRTMTSMGGRLLRRWLLQPLLNPEAIRNRQAAIQELCQDGRLRQDLRSLLQKIYDLERLSGRAGAGTANARDLLALAESLLRLPELAQLLSRAQSPLLAQLQQVPPELEQLGDRLQQHLVESPPLQLTEGGLIRSGVAIALDELRQQVESDRQWIASLEASERTATGINSLKVGYSKTFGYFISLSRSKADQVPDHYIRRQTLTNEERFITPDLKERESRILNAQTDLNQLEYDLFVGLRSEVSHHVETIRAIATAVAAADVLAALAEVAVYQNYCCPEIRDDRQLAIQDGRHPVVEQALPSGFYVPNSCGLGSDRGPDLIVLTGPNASGKSCYLRQVGLIQLLAQIGSFVPAKNAQVGICDRIFTRVGAVDDLATGQSTFMVEMNETANILNHATARSLVLLDEIGRGTATFDGLSIAWAVAEYLAREIQARTIFATHYHELNELSGLLKNVANFQVTVKELPDRIVFLHQVQPGGADRSYGIEAARLAGLPSEVIDRAREVMSRIEKHSRIAVGLRRGNGSQRRTQASPQQIDATIATEQLGLFSGPSH.

656–663 (GPNASGKS) is a binding site for ATP.

The protein belongs to the DNA mismatch repair MutS family.

Functionally, this protein is involved in the repair of mismatches in DNA. It is possible that it carries out the mismatch recognition step. This protein has a weak ATPase activity. This is DNA mismatch repair protein MutS from Synechococcus elongatus (strain ATCC 33912 / PCC 7942 / FACHB-805) (Anacystis nidulans R2).